A 606-amino-acid chain; its full sequence is NADH-ubiquinone oxidoreductase chain 5 (606 aa).

The next 16 membrane-spanning stretches (helical) occupy residues 4-24 (FSSL…SSIL), 38-58 (NIIS…IHSG), 87-107 (MIFV…SLWY), 117-137 (FFKY…ANNL), 140-160 (LFIG…WWYG), 171-191 (AILY…WFLF), 211-233 (LPLL…HPWL), 241-261 (TPVS…FLLI), 273-293 (IQSL…ICAL), 301-320 (IIAF…IGIN), 325-347 (AFLH…GSII), 366-386 (MPFT…MPFL), 413-433 (LIAT…ALLG), 457-477 (LLIG…PTTI), 488-508 (LTAL…SLIT), and 584-604 (IKLY…LFNL).

The protein belongs to the complex I subunit 5 family. As to quaternary structure, core subunit of respiratory chain NADH dehydrogenase (Complex I) which is composed of 45 different subunits.

The protein localises to the mitochondrion inner membrane. The catalysed reaction is a ubiquinone + NADH + 5 H(+)(in) = a ubiquinol + NAD(+) + 4 H(+)(out). Functionally, core subunit of the mitochondrial membrane respiratory chain NADH dehydrogenase (Complex I) which catalyzes electron transfer from NADH through the respiratory chain, using ubiquinone as an electron acceptor. Essential for the catalytic activity and assembly of complex I. This Equus asinus (Donkey) protein is NADH-ubiquinone oxidoreductase chain 5 (MT-ND5).